Reading from the N-terminus, the 158-residue chain is MFDILMYLFENFIHSETEIRVDQDELTDELVRAGFHQDEIYKALSWLEKLAALQETDINPYLVKGPTSFVTRIYTHEEEMRLDIECRGFLMFLEQINVLDSTTREMVIDRVMEIDSKEFCLEDMKWVVLMVLFNVPGKENAYAQMEDLLFEEPEGPLH.

This sequence belongs to the Smg family.

This Pseudoalteromonas atlantica (strain T6c / ATCC BAA-1087) protein is Protein Smg homolog.